Consider the following 62-residue polypeptide: Short neurotoxin C (62 aa).

The span at 1–16 shows a compositional bias: polar residues; that stretch reads RRCFNQQSSQPQTNKS. The interval 1–22 is disordered; that stretch reads RRCFNQQSSQPQTNKSCPPGEN. Disulfide bonds link Cys3-Cys24, Cys17-Cys41, Cys43-Cys54, and Cys55-Cys60.

The protein belongs to the three-finger toxin family. Short-chain subfamily. Type I alpha-neurotoxin sub-subfamily. In terms of tissue distribution, expressed by the venom gland.

The protein resides in the secreted. Binds to muscle nicotinic acetylcholine receptor (nAChR) and inhibit acetylcholine from binding to the receptor, thereby impairing neuromuscular transmission. The sequence is that of Short neurotoxin C from Laticauda laticaudata (Blue-ringed sea krait).